Here is a 165-residue protein sequence, read N- to C-terminus: Small ribosomal subunit protein uS3m (165 aa).

A mitochondrion-targeting transit peptide spans 1-30; that stretch reads MNFLKKLLPQVATEVQQLSRSGFHTSSVCC.

The protein belongs to the universal ribosomal protein uS3 family. Component of the mitochondrial ribosome small subunit (28S) which comprises a 12S rRNA and about 30 distinct proteins.

It localises to the mitochondrion. This Drosophila melanogaster (Fruit fly) protein is Small ribosomal subunit protein uS3m (mRpS24).